A 222-amino-acid chain; its full sequence is MQPLSPAFIDQLCFDDIGLIPAISQDWLDGAVLMMAWMNRTALEQTLKSGQVHYWSRSRQELWHKGATSGHTQILKGIRYDCDADVLLLSIEQTGLVSCHTGARSCFFAEVNQHSQGDSLTLPPPMDACSELFRVIDQRHTTPEANSYTNKLLEGGDNRILKKIGEESAEFVMACKDDDEKAIANEAADLLFHLQVALAHHGVNWRDVLEVLANRRGAPRRN.

Residues 1-128 form a phosphoribosyl-AMP cyclohydrolase region; the sequence is MQPLSPAFID…SLTLPPPMDA (128 aa). Residues 129-222 are phosphoribosyl-ATP pyrophosphohydrolase; sequence CSELFRVIDQ…ANRRGAPRRN (94 aa).

This sequence in the N-terminal section; belongs to the PRA-CH family. In the C-terminal section; belongs to the PRA-PH family.

It localises to the cytoplasm. The enzyme catalyses 1-(5-phospho-beta-D-ribosyl)-ATP + H2O = 1-(5-phospho-beta-D-ribosyl)-5'-AMP + diphosphate + H(+). It carries out the reaction 1-(5-phospho-beta-D-ribosyl)-5'-AMP + H2O = 1-(5-phospho-beta-D-ribosyl)-5-[(5-phospho-beta-D-ribosylamino)methylideneamino]imidazole-4-carboxamide. The protein operates within amino-acid biosynthesis; L-histidine biosynthesis; L-histidine from 5-phospho-alpha-D-ribose 1-diphosphate: step 2/9. It functions in the pathway amino-acid biosynthesis; L-histidine biosynthesis; L-histidine from 5-phospho-alpha-D-ribose 1-diphosphate: step 3/9. This is Histidine biosynthesis bifunctional protein HisIE from Prochlorococcus marinus (strain MIT 9313).